Reading from the N-terminus, the 125-residue chain is Large ribosomal subunit protein bL12 (125 aa).

The protein belongs to the bacterial ribosomal protein bL12 family. As to quaternary structure, homodimer. Part of the ribosomal stalk of the 50S ribosomal subunit. Forms a multimeric L10(L12)X complex, where L10 forms an elongated spine to which 2 to 4 L12 dimers bind in a sequential fashion. Binds GTP-bound translation factors.

In terms of biological role, forms part of the ribosomal stalk which helps the ribosome interact with GTP-bound translation factors. Is thus essential for accurate translation. This chain is Large ribosomal subunit protein bL12, found in Campylobacter jejuni subsp. jejuni serotype O:6 (strain 81116 / NCTC 11828).